The primary structure comprises 208 residues: Uracil phosphoribosyltransferase (208 aa).

Residues arginine 78, arginine 103, and 130–138 contribute to the 5-phospho-alpha-D-ribose 1-diphosphate site; that span reads DPMLATGGT. Uracil-binding positions include isoleucine 193 and 198–200; that span reads GDA. Residue aspartate 199 participates in 5-phospho-alpha-D-ribose 1-diphosphate binding.

It belongs to the UPRTase family. The cofactor is Mg(2+).

It carries out the reaction UMP + diphosphate = 5-phospho-alpha-D-ribose 1-diphosphate + uracil. Its pathway is pyrimidine metabolism; UMP biosynthesis via salvage pathway; UMP from uracil: step 1/1. Allosterically activated by GTP. Catalyzes the conversion of uracil and 5-phospho-alpha-D-ribose 1-diphosphate (PRPP) to UMP and diphosphate. The chain is Uracil phosphoribosyltransferase from Nitratidesulfovibrio vulgaris (strain DSM 19637 / Miyazaki F) (Desulfovibrio vulgaris).